The primary structure comprises 185 residues: Peptidyl-tRNA hydrolase (185 aa).

Tyrosine 14 is a binding site for tRNA. The active-site Proton acceptor is the histidine 19. Tyrosine 65, asparagine 67, and asparagine 113 together coordinate tRNA.

This sequence belongs to the PTH family. As to quaternary structure, monomer.

The protein resides in the cytoplasm. The enzyme catalyses an N-acyl-L-alpha-aminoacyl-tRNA + H2O = an N-acyl-L-amino acid + a tRNA + H(+). Functionally, hydrolyzes ribosome-free peptidyl-tRNAs (with 1 or more amino acids incorporated), which drop off the ribosome during protein synthesis, or as a result of ribosome stalling. Catalyzes the release of premature peptidyl moieties from peptidyl-tRNA molecules trapped in stalled 50S ribosomal subunits, and thus maintains levels of free tRNAs and 50S ribosomes. This is Peptidyl-tRNA hydrolase from Rickettsia prowazekii (strain Madrid E).